The sequence spans 134 residues: Small ribosomal subunit protein uS11 (134 aa).

The interval 114 to 134 (SISDVTPQPHNGCRPPKRRRV) is disordered.

This sequence belongs to the universal ribosomal protein uS11 family. In terms of assembly, part of the 30S ribosomal subunit. Interacts with proteins S7 and S18. Binds to IF-3.

Functionally, located on the platform of the 30S subunit, it bridges several disparate RNA helices of the 16S rRNA. Forms part of the Shine-Dalgarno cleft in the 70S ribosome. This Corynebacterium efficiens (strain DSM 44549 / YS-314 / AJ 12310 / JCM 11189 / NBRC 100395) protein is Small ribosomal subunit protein uS11.